A 678-amino-acid polypeptide reads, in one-letter code: Secretin ExeD (678 aa).

The N-terminal stretch at 1-25 (MINKGKSWRLATVAAALMMAGSAWA) is a signal peptide. Residues 26-122 (TEYSASFKNA…VVDETNPGIG (97 aa)) form an N0 region. Residues 124-188 (EMVTRVVPVR…EVVRRVDKAG (65 aa)) form an N1 region. The interval 189-264 (DQEVDIIKLR…MVRQLDRDLQ (76 aa)) is N2. An N3 region spans residues 267 to 347 (GNTRVFYLKY…ELEQVVAKLD (81 aa)). The segment at 352 to 602 (QVLVEAIIVE…VFIRPTILRD (251 aa)) is secretin. Positions 604 to 678 (HVYSGISSNK…GAQPFVQGNK (75 aa)) are s domain.

Belongs to the bacterial secretin family. GSP D subfamily. In terms of assembly, forms a cylindrical channel with 15 subunits.

It localises to the cell outer membrane. Involved in a type II secretion system (T2SS, formerly general secretion pathway, GSP) for the export of proteins. This subunit forms the outer membrane channel. The polypeptide is Secretin ExeD (exeD) (Aeromonas salmonicida).